A 277-amino-acid polypeptide reads, in one-letter code: Urease accessory protein UreD (277 aa).

Belongs to the UreD family. In terms of assembly, ureD, UreF and UreG form a complex that acts as a GTP-hydrolysis-dependent molecular chaperone, activating the urease apoprotein by helping to assemble the nickel containing metallocenter of UreC. The UreE protein probably delivers the nickel.

It localises to the cytoplasm. In terms of biological role, required for maturation of urease via the functional incorporation of the urease nickel metallocenter. In Yersinia pestis bv. Antiqua (strain Antiqua), this protein is Urease accessory protein UreD.